The chain runs to 385 residues: Mannitol-1-phosphate 5-dehydrogenase (385 aa).

An NAD(+)-binding site is contributed by 3–14; sequence ALQFGAGNIGRG.

The protein belongs to the mannitol dehydrogenase family.

The catalysed reaction is D-mannitol 1-phosphate + NAD(+) = beta-D-fructose 6-phosphate + NADH + H(+). This Buchnera aphidicola subsp. Acyrthosiphon pisum (strain Tuc7) protein is Mannitol-1-phosphate 5-dehydrogenase.